Reading from the N-terminus, the 79-residue chain is Acyl carrier protein (79 aa).

The Carrier domain occupies 2 to 77 (SDIEARVRKI…HAIDYIKSNA (76 aa)). Residue serine 37 is modified to O-(pantetheine 4'-phosphoryl)serine.

It belongs to the acyl carrier protein (ACP) family. 4'-phosphopantetheine is transferred from CoA to a specific serine of apo-ACP by AcpS. This modification is essential for activity because fatty acids are bound in thioester linkage to the sulfhydryl of the prosthetic group.

Its subcellular location is the cytoplasm. The protein operates within lipid metabolism; fatty acid biosynthesis. Its function is as follows. Carrier of the growing fatty acid chain in fatty acid biosynthesis. This is Acyl carrier protein from Xylella fastidiosa (strain M23).